Reading from the N-terminus, the 629-residue chain is Pescadillo homolog (629 aa).

One can recognise a BRCT domain in the interval 321-414; the sequence is RLRTLFKGLK…QLLPTNKYFI (94 aa). Disordered regions lie at residues 439–470, 488–568, and 598–629; these read KALLDPSLIETHAQSDEDSEDEAEKEEEETVD, EYKK…MVKP, and IEASEKEARKTAKREARKEAAAAAAKASKLGK. Residues Ser453 and Ser457 each carry the phosphoserine modification. Composition is skewed to acidic residues over residues 454–470 and 498–523; these read DEDSEDEAEKEEEETVD and VNEDEEDPEDDDEDDDEEEAEEEELD. Residues 524–535 are compositionally biased toward basic and acidic residues; the sequence is EKSKRLQEEKQK. Residues 542-551 are compositionally biased toward basic residues; the sequence is KVHKVNKRQV. 2 stretches are compositionally biased toward basic and acidic residues: residues 552-561 and 598-617; these read HKAEVDEHRL and IEASEKEARKTAKREARKEA. The stretch at 584–627 forms a coiled coil; it reads KEKEEWLLRKKRRTIEASEKEARKTAKREARKEAAAAAAKASKL. Low complexity predominate over residues 618–629; sequence AAAAAKASKLGK.

This sequence belongs to the pescadillo family.

It localises to the nucleus. Its subcellular location is the nucleolus. It is found in the nucleoplasm. In terms of biological role, required for maturation of ribosomal RNAs and formation of the large ribosomal subunit. The sequence is that of Pescadillo homolog from Drosophila erecta (Fruit fly).